A 697-amino-acid polypeptide reads, in one-letter code: Phenoloxidase 1 (697 aa).

A propeptide spans 1-101 (removed by PPAE1); sequence MSDMSGDVVE…PKHQEMATEV (101 aa). Residues His217, His221, and His247 each coordinate Cu cation. Residues Asn260 and Asn313 are each glycosylated (N-linked (GlcNAc...) asparagine). Residue Glu355 is the Proton acceptor of the active site. Cu cation contacts are provided by His370, His374, and His410. 2 N-linked (GlcNAc...) asparagine glycosylation sites follow: Asn498 and Asn552. Intrachain disulfides connect Cys587-Cys631 and Cys589-Cys638.

The protein belongs to the tyrosinase family. Heterodimer. Cu(2+) serves as cofactor. Activated by the cleavage of the N-terminal propeptide by PPAE1. In terms of tissue distribution, expressed in hemocytes.

The protein localises to the secreted. The enzyme catalyses L-tyrosine + O2 = L-dopaquinone + H2O. It carries out the reaction 2 L-dopa + O2 = 2 L-dopaquinone + 2 H2O. Its activity is regulated as follows. Activated by a cationic detergent cetyl pyridinium chloride (CPC). Inhibited by phenyl thio-urea (PTU). Functionally, this is a copper-containing oxidase that functions in the formation of pigments such as melanins and other polyphenolic compounds. Catalyzes the rate-limiting conversions of tyrosine to DOPA, DOPA to DOPA-quinone and possibly 5,6 dihydroxyindole to indole-5'6 quinone. Catalyzes the oxidation of 4-methylcatechol. Binds to the surface of hemocytes and is involved in hemocyte melanization. This is Phenoloxidase 1 from Spodoptera litura (Asian cotton leafworm).